Consider the following 297-residue polypeptide: Bifunctional protein FolD 2 (297 aa).

Residues Gly164–Ser166, Ser193, and Ile234 each bind NADP(+).

Belongs to the tetrahydrofolate dehydrogenase/cyclohydrolase family. Homodimer.

The catalysed reaction is (6R)-5,10-methylene-5,6,7,8-tetrahydrofolate + NADP(+) = (6R)-5,10-methenyltetrahydrofolate + NADPH. It catalyses the reaction (6R)-5,10-methenyltetrahydrofolate + H2O = (6R)-10-formyltetrahydrofolate + H(+). Its pathway is one-carbon metabolism; tetrahydrofolate interconversion. Its function is as follows. Catalyzes the oxidation of 5,10-methylenetetrahydrofolate to 5,10-methenyltetrahydrofolate and then the hydrolysis of 5,10-methenyltetrahydrofolate to 10-formyltetrahydrofolate. The protein is Bifunctional protein FolD 2 of Haloarcula marismortui (strain ATCC 43049 / DSM 3752 / JCM 8966 / VKM B-1809) (Halobacterium marismortui).